The primary structure comprises 156 residues: Ribosomal RNA large subunit methyltransferase H (156 aa).

S-adenosyl-L-methionine is bound by residues Leu73, Gly104, and Ile123 to Leu128.

It belongs to the RNA methyltransferase RlmH family. As to quaternary structure, homodimer.

It localises to the cytoplasm. It carries out the reaction pseudouridine(1915) in 23S rRNA + S-adenosyl-L-methionine = N(3)-methylpseudouridine(1915) in 23S rRNA + S-adenosyl-L-homocysteine + H(+). Functionally, specifically methylates the pseudouridine at position 1915 (m3Psi1915) in 23S rRNA. The polypeptide is Ribosomal RNA large subunit methyltransferase H (Herminiimonas arsenicoxydans).